We begin with the raw amino-acid sequence, 274 residues long: Ribosomal RNA small subunit methyltransferase A (274 aa).

N28, L30, G55, E77, D103, and N122 together coordinate S-adenosyl-L-methionine.

Belongs to the class I-like SAM-binding methyltransferase superfamily. rRNA adenine N(6)-methyltransferase family. RsmA subfamily.

The protein resides in the cytoplasm. The enzyme catalyses adenosine(1518)/adenosine(1519) in 16S rRNA + 4 S-adenosyl-L-methionine = N(6)-dimethyladenosine(1518)/N(6)-dimethyladenosine(1519) in 16S rRNA + 4 S-adenosyl-L-homocysteine + 4 H(+). Functionally, specifically dimethylates two adjacent adenosines (A1518 and A1519) in the loop of a conserved hairpin near the 3'-end of 16S rRNA in the 30S particle. May play a critical role in biogenesis of 30S subunits. The polypeptide is Ribosomal RNA small subunit methyltransferase A (Sinorhizobium medicae (strain WSM419) (Ensifer medicae)).